The chain runs to 263 residues: Small ribosomal subunit protein eS4 (263 aa).

In terms of domain architecture, S4 RNA-binding spans 42–104; sequence LPLIIFLRNR…TGEHFRLVYD (63 aa).

The protein belongs to the eukaryotic ribosomal protein eS4 family. As to quaternary structure, component of the small ribosomal subunit.

The protein localises to the cytoplasm. In terms of biological role, component of the small ribosomal subunit. The ribosome is a large ribonucleoprotein complex responsible for the synthesis of proteins in the cell. This is Small ribosomal subunit protein eS4 (rps4) from Xenopus tropicalis (Western clawed frog).